The following is a 226-amino-acid chain: Protein GrpE (226 aa).

Disordered regions lie at residues 1 to 24 and 205 to 226; these read MADE…PRDR and GVSK…EDNA. A compositionally biased stretch (polar residues) spans 217–226; sequence NGASTSEDNA.

The protein belongs to the GrpE family. Homodimer.

Its subcellular location is the cytoplasm. Functionally, participates actively in the response to hyperosmotic and heat shock by preventing the aggregation of stress-denatured proteins, in association with DnaK and GrpE. It is the nucleotide exchange factor for DnaK and may function as a thermosensor. Unfolded proteins bind initially to DnaJ; upon interaction with the DnaJ-bound protein, DnaK hydrolyzes its bound ATP, resulting in the formation of a stable complex. GrpE releases ADP from DnaK; ATP binding to DnaK triggers the release of the substrate protein, thus completing the reaction cycle. Several rounds of ATP-dependent interactions between DnaJ, DnaK and GrpE are required for fully efficient folding. The polypeptide is Protein GrpE (Brucella melitensis biotype 1 (strain ATCC 23456 / CCUG 17765 / NCTC 10094 / 16M)).